Here is a 297-residue protein sequence, read N- to C-terminus: HTH-type transcriptional regulator ArgP (297 aa).

The 57-residue stretch at P4–T60 folds into the HTH lysR-type domain. A DNA-binding region (H-T-H motif) is located at residues F21 to K40.

Belongs to the LysR transcriptional regulatory family. In terms of assembly, homodimer.

In terms of biological role, controls the transcription of genes involved in arginine and lysine metabolism. This chain is HTH-type transcriptional regulator ArgP, found in Escherichia fergusonii (strain ATCC 35469 / DSM 13698 / CCUG 18766 / IAM 14443 / JCM 21226 / LMG 7866 / NBRC 102419 / NCTC 12128 / CDC 0568-73).